Here is a 63-residue protein sequence, read N- to C-terminus: Large ribosomal subunit protein uL29 (63 aa).

Belongs to the universal ribosomal protein uL29 family.

This Flavobacterium johnsoniae (strain ATCC 17061 / DSM 2064 / JCM 8514 / BCRC 14874 / CCUG 350202 / NBRC 14942 / NCIMB 11054 / UW101) (Cytophaga johnsonae) protein is Large ribosomal subunit protein uL29.